Consider the following 354-residue polypeptide: Neutral protease 2 homolog BCIN_12g06300 (354 aa).

The signal sequence occupies residues 1-19; the sequence is MRSFSKILAVASLAAIANS. Residues 20–179 constitute a propeptide that is removed on maturation; it reads AVLKRDNNVL…PSSIDRRTVL (160 aa). Cystine bridges form between cysteine 183/cysteine 255 and cysteine 262/cysteine 280. Histidine 305 contributes to the Zn(2+) binding site. Glutamate 306 is a catalytic residue. Zn(2+) contacts are provided by histidine 309 and aspartate 320.

This sequence belongs to the peptidase M35 family. The cofactor is Zn(2+).

It is found in the secreted. It carries out the reaction Preferential cleavage of bonds with hydrophobic residues in P1'. Also 3-Asn-|-Gln-4 and 8-Gly-|-Ser-9 bonds in insulin B chain.. Its function is as follows. Secreted metalloproteinase that allows assimilation of proteinaceous substrates. Shows high activities on basic nuclear substrates such as histone and protamine. This chain is Neutral protease 2 homolog BCIN_12g06300, found in Botryotinia fuckeliana (strain B05.10) (Noble rot fungus).